Reading from the N-terminus, the 331-residue chain is uncharacterized protein (331 aa).

This sequence belongs to the ornithine cyclodeaminase/mu-crystallin family.

This is an uncharacterized protein from Sinorhizobium fredii (strain NBRC 101917 / NGR234).